The following is a 20-amino-acid chain: Antifungal protein J (20 aa).

It localises to the vacuole. Inhibitor of serine proteases chymotrypsin, pepsin and trypsin. Has strong antifungal activity against the human pathogenic fungi C.albicans TIMM 1768, S.cerevisiae KCTC 7296 and T.beigelli KCTC 7707, but lacks antifungal activity against the plant pathogenic fungi C.gloeosporioides KACC 40003, C.coccodes KACC 40803 and D.bryoniae KACC 40669. Lacks hemolytic activity against human erythrocytes. The chain is Antifungal protein J from Solanum tuberosum (Potato).